The primary structure comprises 801 residues: Glycerol-3-phosphate acyltransferase 2, mitochondrial (801 aa).

The segment at 1-24 (MDTMLKSNPQTQQRSNHNGQETSL) is disordered. The Cytoplasmic portion of the chain corresponds to 1 to 305 (MDTMLKSNPQ…PGPRLSALGQ (305 aa)). Residues 180-290 (QLHKGQMKMV…SGQPLLIFLE (111 aa)) are acyltransferase. The short motif at 205–210 (HKSLLD) is the HXXXXD motif element. A helical membrane pass occupies residues 306–332 (AWLGVVIQAVQAGIISDATLVPVAIAY). The Mitochondrial intermembrane portion of the chain corresponds to 333 to 449 (DLVPDAPCNM…QLLVRRLSRH (117 aa)). A helical membrane pass occupies residues 450 to 472 (VLSASVASSAVMSTAIMATLLLL). Over 473–801 (KHQKGVVLSQ…EQFIRQFICS (329 aa)) the chain is Cytoplasmic. Residue S662 is modified to Phosphoserine. T666 bears the Phosphothreonine mark. S668 and S670 each carry phosphoserine.

The protein belongs to the GPAT/DAPAT family. As to quaternary structure, interacts with PIWIL2. Highly expressed in the testis. Expressed at lower levels in the heart, liver, kidney, spleen and adipose cells. Only detected in primary spermatocytes.

It localises to the mitochondrion outer membrane. The catalysed reaction is sn-glycerol 3-phosphate + an acyl-CoA = a 1-acyl-sn-glycero-3-phosphate + CoA. It carries out the reaction a 1-acyl-sn-glycero-3-phosphate + an acyl-CoA = a 1,2-diacyl-sn-glycero-3-phosphate + CoA. The enzyme catalyses 1-(9Z-octadecenoyl)-sn-glycero-3-phosphate + (9Z)-octadecenoyl-CoA = 1,2-di-(9Z-octadecenoyl)-sn-glycero-3-phosphate + CoA. It catalyses the reaction 1-(9Z-octadecenoyl)-sn-glycero-3-phosphate + (5Z,8Z,11Z,14Z)-eicosatetraenoyl-CoA = 1-(9Z)-octadecenoyl-2-(5Z,8Z,11Z,14Z)-eicosatetraenoyl-sn-glycero-3-phosphate + CoA. The catalysed reaction is (5Z,8Z,11Z,14Z)-eicosatetraenoyl-CoA + sn-glycerol 3-phosphate = 1-(5Z,8Z,11Z,14Z-eicosatetraenoyl)-sn-glycero-3-phosphate + CoA. Its pathway is phospholipid metabolism; CDP-diacylglycerol biosynthesis; CDP-diacylglycerol from sn-glycerol 3-phosphate: step 1/3. With respect to regulation, inhibited by N-ethylmaleimide (NEM). Transfers an acyl-group from acyl-ACP to the sn-1 position of glycerol-3-phosphate producing a lysophosphatidic acid (LPA), an essential step for the triacylglycerol (TAG) and glycerophospholipids. In vitro also transfers an acyl-group from acyl-ACP to the LPA producing a phosphatidic acid (PA). Prefers arachidonoyl-CoA as the acyl donor. Required for primary processing step during piRNA biosynthesis. Molecular mechanisms by which it promotes piRNA biosynthesis are unclear and do not involve its acyltransferase activity. The protein is Glycerol-3-phosphate acyltransferase 2, mitochondrial of Mus musculus (Mouse).